We begin with the raw amino-acid sequence, 366 residues long: MVIQPSLLLLLLLTLQDVDSCQGPELVRELVLAKVKALFLDALGPPAMDGEGGGPGIRRLPRRHALGGFMHRTSEPEEEDVSQAILFPATGATCEDQAAAGGLAQEPEEGLFTYVFRPSQHIRSHQVTSAQLWFHTGLDRKSTAASNSSRPLLDLLVLSSGGPMAVPVSLGQSPPRWAVLHLAASAFPLLTHPILVLLLRCPLCSCSGRPETTPFLVAHTRARAPSAGERARRSAPSMPWPWSPAALRLLQRPPEEPSAHAFCHRAALNISFQELGWDRWIVHPPSFIFHYCHGSCGMPTSDLPLPVPGAPPTPAQPLFLVPGAKPCCAALPGSMRSLRVRTTSDGGYSFKYEMVPNLITQHCACI.

Positions 1–20 are cleaved as a signal peptide; sequence MVIQPSLLLLLLLTLQDVDS. The propeptide occupies 21–63; the sequence is CQGPELVRELVLAKVKALFLDALGPPAMDGEGGGPGIRRLPRR. Residues 64-233 constitute a propeptide, inhibin alpha N-terminal region; that stretch reads HALGGFMHRT…APSAGERARR (170 aa). N-linked (GlcNAc...) asparagine glycans are attached at residues Asn147 and Asn269. Cystine bridges form between Cys263–Cys328, Cys292–Cys363, and Cys296–Cys365.

The protein belongs to the TGF-beta family. As to quaternary structure, dimeric, linked by one or more disulfide bonds. Activin B is a dimer of alpha and beta-B. Inhibin A is a dimer of alpha and beta-A. Inhibin B is a dimer of alpha and beta-B. Interacts with TGFBR3L; this interaction regulates female fertility. Proteolytic processing yields a number of bioactive forms, consisting either solely of the mature alpha chain, of the most N-terminal propeptide linked through a disulfide bond to the mature alpha chain, or of the entire proprotein. In terms of tissue distribution, mainly expressed in ovary and testis. Alpha- and beta-B-subunits are the predominant forms found in testis. Also found in placenta, pituitary, adrenal gland, bone marrow, kidney, spinal cord and brain.

The protein localises to the secreted. Inhibins and activins inhibit and activate, respectively, the secretion of follitropin by the pituitary gland. Inhibins/activins are involved in regulating a number of diverse functions such as hypothalamic and pituitary hormone secretion, gonadal hormone secretion, germ cell development and maturation, erythroid differentiation, insulin secretion, nerve cell survival, embryonic axial development or bone growth, depending on their subunit composition. Inhibins appear to oppose the functions of activins. Its function is as follows. Inhibin A is a dimer of alpha/INHA and beta-A/INHBA that functions as a feedback regulator in the hypothalamic-pituitary-gonadal (HPG) axis. Inhibits the secretion of FSH from the anterior pituitary gland by acting on pituitary gonadotrope cells. Antagonizes activin A by binding to the proteoglycan, betaglycan, and forming a stable complex with and, thereby, sequestering type II activin receptors while excluding type I receptor. Functionally, inhibin B is a dimer of alpha and beta-B that plays a crucial role in the regulation of the reproductive system by inhibiting the secretion of follicle-stimulating hormone (FSH) from the anterior pituitary gland. Thereby, maintains reproductive homeostasis in both males and females. Acts as a more potent suppressor of FSH release than inhibin A. Functions as competitive receptor antagonist binding activin type II receptors with high affinity in the presence of the TGF-beta type III coreceptor/TGFBR3L. This is Inhibin alpha chain (Inha) from Rattus norvegicus (Rat).